The sequence spans 968 residues: Isoleucine--tRNA ligase (968 aa).

The 'HIGH' region signature appears at P68–H78. An L-isoleucyl-5'-AMP-binding site is contributed by E584. A 'KMSKS' region motif is present at residues K625–S629. Position 628 (K628) interacts with ATP. Zn(2+)-binding residues include C938, C941, C958, and C961.

Belongs to the class-I aminoacyl-tRNA synthetase family. IleS type 1 subfamily. In terms of assembly, monomer. Zn(2+) is required as a cofactor.

Its subcellular location is the cytoplasm. The catalysed reaction is tRNA(Ile) + L-isoleucine + ATP = L-isoleucyl-tRNA(Ile) + AMP + diphosphate. In terms of biological role, catalyzes the attachment of isoleucine to tRNA(Ile). As IleRS can inadvertently accommodate and process structurally similar amino acids such as valine, to avoid such errors it has two additional distinct tRNA(Ile)-dependent editing activities. One activity is designated as 'pretransfer' editing and involves the hydrolysis of activated Val-AMP. The other activity is designated 'posttransfer' editing and involves deacylation of mischarged Val-tRNA(Ile). In Synechococcus sp. (strain CC9311), this protein is Isoleucine--tRNA ligase.